A 112-amino-acid polypeptide reads, in one-letter code: MLSATCRRLAPALRRLRALSAVAGRFLQVPGARLCSDQSERAEQPHTFHPALLQFLVCPLSKKPLRYEASTNELVNEELGIAYPIIDGIPNMIPQAARTTRQNEKQEEAEQP.

Residues 1-34 (MLSATCRRLAPALRRLRALSAVAGRFLQVPGARL) constitute a mitochondrion transit peptide. A TRM112 domain is found at 49 to 95 (HPALLQFLVCPLSKKPLRYEASTNELVNEELGIAYPIIDGIPNMIPQ).

It belongs to the PREY family. Interacts (via TRM112 domain) with NDUFAF5; the interaction is direct and stabilizes NDUFAF5 protein. Interacts with COQ5; the interaction is direct, stabilizes COQ5 protein and associates PYURF with COQ enzyme complex.

It is found in the mitochondrion. In mitochondria, S-adenosylmethionine-dependent methyltransferase chaperone that supports both coenzyme Q biosynthesis, by stabilizing its components, such as COQ5, and NADH:ubiquinone oxidoreductase complex (complex I, MT-ND1) assembly, by stabilizing complex I assembly factors, such as NDUFAF5. The sequence is that of Protein preY, mitochondrial (Pyurf) from Mus musculus (Mouse).